Consider the following 452-residue polypeptide: Glucose-6-phosphate isomerase (452 aa).

Catalysis depends on glutamate 290, which acts as the Proton donor. Catalysis depends on residues histidine 311 and lysine 425.

This sequence belongs to the GPI family.

The protein resides in the cytoplasm. The enzyme catalyses alpha-D-glucose 6-phosphate = beta-D-fructose 6-phosphate. It functions in the pathway carbohydrate biosynthesis; gluconeogenesis. The protein operates within carbohydrate degradation; glycolysis; D-glyceraldehyde 3-phosphate and glycerone phosphate from D-glucose: step 2/4. Functionally, catalyzes the reversible isomerization of glucose-6-phosphate to fructose-6-phosphate. This Limosilactobacillus reuteri (strain DSM 20016) (Lactobacillus reuteri) protein is Glucose-6-phosphate isomerase.